The primary structure comprises 520 residues: Keratin, type II cytoskeletal 8 (520 aa).

A compositionally biased stretch (low complexity) spans 1–19 (MSTYSKKTSYTVKSSSSGS). The disordered stretch occupies residues 1 to 20 (MSTYSKKTSYTVKSSSSGSI). A head region spans residues 2 to 114 (STYSKKTSYT…DPNIQIVRTQ (113 aa)). At S28 the chain carries Phosphoserine. The tract at residues 115–150 (EKEQIKTLNNRFASFIDKVRFLEQQNKMLETKWSLL) is coil 1A. Residues 115 to 426 (EKEQIKTLNN…KLLEGEEDRL (312 aa)) enclose the IF rod domain. The segment at 151 to 166 (QNQTATRSNIDAMFEA) is linker 1. The coil 1B stretch occupies residues 168 to 259 (IANLRRQLDS…QIFEEEIREL (92 aa)). Residues 260 to 283 (QSQIKDTSVVVEMDNSRNLDMDAI) are linker 12. A coil 2 region spans residues 284–422 (VAEVRAQYED…ATYRKLLEGE (139 aa)). The tract at residues 423–520 (EDRLATGIKA…VSESSEVVQD (98 aa)) is tail.

It belongs to the intermediate filament family. In terms of assembly, heterotetramer of two type I and two type II keratins. Keratin-8 associates with keratin-18. In terms of tissue distribution, expressed in simple epithelia.

Its subcellular location is the cytoplasm. It localises to the nucleus. The protein localises to the nucleoplasm. The protein resides in the nucleus matrix. In terms of biological role, together with KRT19, helps to link the contractile apparatus to dystrophin at the costameres of striated muscle. The sequence is that of Keratin, type II cytoskeletal 8 from Danio rerio (Zebrafish).